Reading from the N-terminus, the 916-residue chain is Isoleucine--tRNA ligase (916 aa).

Positions 57 to 67 match the 'HIGH' region motif; it reads PYANGNLHMGH. Glutamate 554 contributes to the L-isoleucyl-5'-AMP binding site. The short motif at 595–599 is the 'KMSKS' region element; it reads KMSKS. Lysine 598 serves as a coordination point for ATP. 4 residues coordinate Zn(2+): cysteine 885, cysteine 888, cysteine 905, and cysteine 908.

This sequence belongs to the class-I aminoacyl-tRNA synthetase family. IleS type 1 subfamily. Monomer. Zn(2+) serves as cofactor.

The protein resides in the cytoplasm. It carries out the reaction tRNA(Ile) + L-isoleucine + ATP = L-isoleucyl-tRNA(Ile) + AMP + diphosphate. Functionally, catalyzes the attachment of isoleucine to tRNA(Ile). As IleRS can inadvertently accommodate and process structurally similar amino acids such as valine, to avoid such errors it has two additional distinct tRNA(Ile)-dependent editing activities. One activity is designated as 'pretransfer' editing and involves the hydrolysis of activated Val-AMP. The other activity is designated 'posttransfer' editing and involves deacylation of mischarged Val-tRNA(Ile). This is Isoleucine--tRNA ligase from Staphylococcus haemolyticus (strain JCSC1435).